The primary structure comprises 218 residues: Large ribosomal subunit protein uL3 (218 aa).

Belongs to the universal ribosomal protein uL3 family. Part of the 50S ribosomal subunit. Forms a cluster with proteins L14 and L19.

In terms of biological role, one of the primary rRNA binding proteins, it binds directly near the 3'-end of the 23S rRNA, where it nucleates assembly of the 50S subunit. In Corynebacterium urealyticum (strain ATCC 43042 / DSM 7109), this protein is Large ribosomal subunit protein uL3.